We begin with the raw amino-acid sequence, 105 residues long: Large ribosomal subunit protein bL21 (105 aa).

The protein belongs to the bacterial ribosomal protein bL21 family. In terms of assembly, part of the 50S ribosomal subunit. Contacts protein L20.

Its function is as follows. This protein binds to 23S rRNA in the presence of protein L20. The chain is Large ribosomal subunit protein bL21 from Parabacteroides distasonis (strain ATCC 8503 / DSM 20701 / CIP 104284 / JCM 5825 / NCTC 11152).